The primary structure comprises 439 residues: Leukocyte immunoglobulin-like receptor subfamily A member 3 (439 aa).

Positions 1 to 23 (MTPILTVLICLGLSLDPRTHVQA) are cleaved as a signal peptide. 4 consecutive Ig-like C2-type domains span residues 27–108 (PKPT…AGLS), 119–224 (TGAY…GVSK), 226–315 (PSLS…DPLD), and 326–415 (PFLS…SDPL). A disulfide bond links Cys49 and Cys98. Asn140 carries an N-linked (GlcNAc...) asparagine glycan. 3 cysteine pairs are disulfide-bonded: Cys145–Cys197, Cys157–Cys167, and Cys246–Cys297. N-linked (GlcNAc...) asparagine glycans are attached at residues Asn281, Asn302, and Asn341. Cysteines 346 and 397 form a disulfide. The N-linked (GlcNAc...) asparagine glycan is linked to Asn431.

N-glycosylation is required for ligand binding. In terms of tissue distribution, detected in B-cells, and at lower levels in natural killer (NK) cells. Detected in peripheral blood monocytes and lung.

The protein resides in the secreted. Acts as a soluble receptor for class I MHC antigens. Binds both classical and non-classical HLA class I molecules but with reduced affinities compared to LILRB1 or LILRB2. Binds with high affinity to the surface of monocytes, leading to abolish LPS-induced TNF-alpha production by monocytes. In Homo sapiens (Human), this protein is Leukocyte immunoglobulin-like receptor subfamily A member 3 (LILRA3).